The chain runs to 115 residues: Ig heavy chain V-III region W3082 (115 aa).

The region spanning 1-114 (EVKLEESGGG…WGQGTLVTVS (114 aa)) is the Ig-like domain. An intrachain disulfide couples Cys22 to Cys98.

In Mus musculus (Mouse), this protein is Ig heavy chain V-III region W3082.